The primary structure comprises 839 residues: LPS-assembly protein LptD (839 aa).

Residues 1–21 (MAIGITACVLSLINYQGLAYS) form the signal peptide.

The protein belongs to the LptD family. Component of the lipopolysaccharide transport and assembly complex. Interacts with LptE and LptA.

It is found in the cell outer membrane. In terms of biological role, together with LptE, is involved in the assembly of lipopolysaccharide (LPS) at the surface of the outer membrane. The sequence is that of LPS-assembly protein LptD from Legionella pneumophila subsp. pneumophila (strain Philadelphia 1 / ATCC 33152 / DSM 7513).